Consider the following 657-residue polypeptide: 1-deoxy-D-xylulose-5-phosphate synthase (657 aa).

Thiamine diphosphate-binding positions include H73 and 113–115 (SHA). D145 contributes to the Mg(2+) binding site. Thiamine diphosphate-binding positions include 146–147 (GA), N175, Y293, and E375. A Mg(2+)-binding site is contributed by N175.

The protein belongs to the transketolase family. DXPS subfamily. In terms of assembly, homodimer. The cofactor is Mg(2+). Thiamine diphosphate serves as cofactor.

It carries out the reaction D-glyceraldehyde 3-phosphate + pyruvate + H(+) = 1-deoxy-D-xylulose 5-phosphate + CO2. The protein operates within metabolic intermediate biosynthesis; 1-deoxy-D-xylulose 5-phosphate biosynthesis; 1-deoxy-D-xylulose 5-phosphate from D-glyceraldehyde 3-phosphate and pyruvate: step 1/1. Catalyzes the acyloin condensation reaction between C atoms 2 and 3 of pyruvate and glyceraldehyde 3-phosphate to yield 1-deoxy-D-xylulose-5-phosphate (DXP). This is 1-deoxy-D-xylulose-5-phosphate synthase from Pseudarthrobacter chlorophenolicus (strain ATCC 700700 / DSM 12829 / CIP 107037 / JCM 12360 / KCTC 9906 / NCIMB 13794 / A6) (Arthrobacter chlorophenolicus).